The sequence spans 100 residues: ATP-dependent Clp protease adapter protein ClpS (100 aa).

This sequence belongs to the ClpS family. Binds to the N-terminal domain of the chaperone ClpA.

Involved in the modulation of the specificity of the ClpAP-mediated ATP-dependent protein degradation. This is ATP-dependent Clp protease adapter protein ClpS from Neisseria meningitidis serogroup B (strain ATCC BAA-335 / MC58).